A 486-amino-acid chain; its full sequence is Glycogen synthase (486 aa).

K15 is a binding site for ADP-alpha-D-glucose.

The protein belongs to the glycosyltransferase 1 family. Bacterial/plant glycogen synthase subfamily.

It catalyses the reaction [(1-&gt;4)-alpha-D-glucosyl](n) + ADP-alpha-D-glucose = [(1-&gt;4)-alpha-D-glucosyl](n+1) + ADP + H(+). Its pathway is glycan biosynthesis; glycogen biosynthesis. Synthesizes alpha-1,4-glucan chains using ADP-glucose. In Thermotoga petrophila (strain ATCC BAA-488 / DSM 13995 / JCM 10881 / RKU-1), this protein is Glycogen synthase.